The chain runs to 156 residues: Small ribosomal subunit protein uS7 (156 aa).

Belongs to the universal ribosomal protein uS7 family. As to quaternary structure, part of the 30S ribosomal subunit. Contacts proteins S9 and S11.

One of the primary rRNA binding proteins, it binds directly to 16S rRNA where it nucleates assembly of the head domain of the 30S subunit. Is located at the subunit interface close to the decoding center, probably blocks exit of the E-site tRNA. In Leifsonia xyli subsp. xyli (strain CTCB07), this protein is Small ribosomal subunit protein uS7.